A 134-amino-acid polypeptide reads, in one-letter code: DNA-binding protein H-NS (134 aa).

The DNA-binding element occupies 111–116 (QGRTLA).

Belongs to the histone-like protein H-NS family. As to quaternary structure, homodimer that oligomerizes on DNA into higher-order complexes that form bridges between disparate regions of DNA compacting it. Interacts with YmoA and other similar proteins.

It is found in the cytoplasm. Its subcellular location is the nucleoid. Functionally, a DNA-binding protein implicated in transcriptional repression and chromosome organization and compaction. Binds nucleation sites in AT-rich DNA and bridges them, forming higher-order nucleoprotein complexes and condensing the chromosome. As many horizontally transferred genes are AT-rich, it plays a central role in silencing foreign genes. A subset of genes are repressed by H-NS in association with other proteins. The sequence is that of DNA-binding protein H-NS (hns) from Proteus vulgaris.